The following is a 142-amino-acid chain: UPF0102 protein PsycPRwf_0497 (142 aa).

Belongs to the UPF0102 family.

The protein is UPF0102 protein PsycPRwf_0497 of Psychrobacter sp. (strain PRwf-1).